A 429-amino-acid polypeptide reads, in one-letter code: 26S proteasome regulatory subunit RPN7 (429 aa).

Serine 8 and serine 77 each carry phosphoserine. The TPR repeat unit spans residues 131 to 164; that stretch reads AQAWINLGEYYAQIGDKDNAEKTLGKSLSKAIST. The PCI domain maps to 223 to 395; sequence NFKEAAKLLV…GIVETNRPDN (173 aa).

In terms of assembly, the 26S proteasome is composed of a core protease, known as the 20S proteasome, capped at one or both ends by the 19S regulatory complex (RC). The RC is composed of at least 18 different subunits in two subcomplexes, the base and the lid, which form the portions proximal and distal to the 20S proteolytic core, respectively. Component of the lid subcomplex of the 19S RC.

Its subcellular location is the nucleus. Functionally, component of the 19S cap proteasome complex which acts as a regulatory subunit of the 26S proteasome, involved in the ATP-dependent degradation of ubiquitinated proteins. The protein is 26S proteasome regulatory subunit RPN7 of Saccharomyces cerevisiae (strain ATCC 204508 / S288c) (Baker's yeast).